We begin with the raw amino-acid sequence, 278 residues long: MRAADALRAAVPRLAAAGIDEAARDARRLLAHAMAIDPARLTLHLPDPLPPEAAARFEAALAARAARQPVGQIVGERLFWGRRFRVTRDTLDPRPETEGLIEAALAEPFATVLDLGTGTGCIAVTLLAERPAAHGIATDLSPAALAVAAENAAALGVASRLELRLSDWFAAVPERVDLILSNPPYIAADEMAALAPEVRLWEPHLALSPGGDGLDAYRAIARGAPAHLRPGGRLLLEIGAAQGRAVAGLVEAAGLARVSVLPDLDGRDRLVSARLPAA.

S-adenosyl-L-methionine-binding positions include 116–120 (GTGTG), Asp-139, Trp-168, and Asn-182. A substrate-binding site is contributed by 182–185 (NPPY).

This sequence belongs to the protein N5-glutamine methyltransferase family. PrmC subfamily.

The enzyme catalyses L-glutaminyl-[peptide chain release factor] + S-adenosyl-L-methionine = N(5)-methyl-L-glutaminyl-[peptide chain release factor] + S-adenosyl-L-homocysteine + H(+). Functionally, methylates the class 1 translation termination release factors RF1/PrfA and RF2/PrfB on the glutamine residue of the universally conserved GGQ motif. This chain is Release factor glutamine methyltransferase, found in Cereibacter sphaeroides (strain ATCC 17023 / DSM 158 / JCM 6121 / CCUG 31486 / LMG 2827 / NBRC 12203 / NCIMB 8253 / ATH 2.4.1.) (Rhodobacter sphaeroides).